The following is a 379-amino-acid chain: DnaJ homolog subfamily B member 14 (379 aa).

At Met1–Asp244 the chain is on the cytoplasmic side. A disordered region spans residues Ser55 to Lys94. Residues Asn108–Gly172 enclose the J domain. Positions Gly221–Glu241 are disordered. The helical transmembrane segment at Gly245–Leu265 threads the bilayer. Residues Ser266–Gly379 are Lumenal-facing.

This sequence belongs to the DnaJ family. DNAJB12/DNAJB14 subfamily. Interacts (via J domain) with HSPA8/Hsc70. Forms a multiprotein complex, at least composed of DNAJB12, DNAJB14, HSPA8/Hsc70 and SGTA; interaction with DNAJB14 and HSPA8/Hsc70 is direct.

The protein resides in the endoplasmic reticulum membrane. Its subcellular location is the nucleus membrane. Its function is as follows. Acts as a co-chaperone with HSPA8/Hsc70; required to promote protein folding and trafficking, prevent aggregation of client proteins, and promote unfolded proteins to endoplasmic reticulum-associated degradation (ERAD) pathway. Acts by determining HSPA8/Hsc70's ATPase and polypeptide-binding activities. Can also act independently of HSPA8/Hsc70: together with DNAJB12, acts as a chaperone that promotes maturation of potassium channels KCND2 and KCNH2 by stabilizing nascent channel subunits and assembling them into tetramers. While stabilization of nascent channel proteins is dependent on HSPA8/Hsc70, the process of oligomerization of channel subunits is independent of HSPA8/Hsc70. When overexpressed, forms membranous structures together with DNAJB12 and HSPA8/Hsc70 within the nucleus; the role of these structures, named DJANGOs, is still unclear. This is DnaJ homolog subfamily B member 14 (DNAJB14) from Bos taurus (Bovine).